The sequence spans 338 residues: Glycerol-3-phosphate dehydrogenase [NAD(P)+] (338 aa).

3 residues coordinate NADPH: Ser13, Trp14, and Lys108. Sn-glycerol 3-phosphate-binding residues include Lys108, Gly139, and Ser141. Ala143 is an NADPH binding site. Residues Lys194, Asp247, Ser257, Arg258, and Asn259 each coordinate sn-glycerol 3-phosphate. Residue Lys194 is the Proton acceptor of the active site. Position 258 (Arg258) interacts with NADPH. NADPH-binding residues include Val282 and Glu284.

The protein belongs to the NAD-dependent glycerol-3-phosphate dehydrogenase family.

The protein resides in the cytoplasm. It carries out the reaction sn-glycerol 3-phosphate + NAD(+) = dihydroxyacetone phosphate + NADH + H(+). The catalysed reaction is sn-glycerol 3-phosphate + NADP(+) = dihydroxyacetone phosphate + NADPH + H(+). It participates in membrane lipid metabolism; glycerophospholipid metabolism. Functionally, catalyzes the reduction of the glycolytic intermediate dihydroxyacetone phosphate (DHAP) to sn-glycerol 3-phosphate (G3P), the key precursor for phospholipid synthesis. This is Glycerol-3-phosphate dehydrogenase [NAD(P)+] from Streptococcus pyogenes serotype M12 (strain MGAS9429).